We begin with the raw amino-acid sequence, 640 residues long: Threonine--tRNA ligase (640 aa).

One can recognise a TGS domain in the interval M1–T61. Positions D242–P533 are catalytic. Zn(2+) is bound by residues C333, H384, and H510.

Belongs to the class-II aminoacyl-tRNA synthetase family. In terms of assembly, homodimer. It depends on Zn(2+) as a cofactor.

It is found in the cytoplasm. It catalyses the reaction tRNA(Thr) + L-threonine + ATP = L-threonyl-tRNA(Thr) + AMP + diphosphate + H(+). Functionally, catalyzes the attachment of threonine to tRNA(Thr) in a two-step reaction: L-threonine is first activated by ATP to form Thr-AMP and then transferred to the acceptor end of tRNA(Thr). Also edits incorrectly charged L-seryl-tRNA(Thr). The sequence is that of Threonine--tRNA ligase from Polynucleobacter asymbioticus (strain DSM 18221 / CIP 109841 / QLW-P1DMWA-1) (Polynucleobacter necessarius subsp. asymbioticus).